Consider the following 146-residue polypeptide: UPF0735 ACT domain-containing protein Cbei_1295 (146 aa).

The region spanning T70–M145 is the ACT domain.

This sequence belongs to the UPF0735 family.

The sequence is that of UPF0735 ACT domain-containing protein Cbei_1295 from Clostridium beijerinckii (strain ATCC 51743 / NCIMB 8052) (Clostridium acetobutylicum).